Consider the following 230-residue polypeptide: Cytidylate kinase (230 aa).

16 to 24 (GPASAGKST) is an ATP binding site.

Belongs to the cytidylate kinase family. Type 1 subfamily.

The protein localises to the cytoplasm. The catalysed reaction is CMP + ATP = CDP + ADP. The enzyme catalyses dCMP + ATP = dCDP + ADP. This Lactobacillus johnsonii (strain CNCM I-12250 / La1 / NCC 533) protein is Cytidylate kinase.